An 84-amino-acid polypeptide reads, in one-letter code: MAHKKGASSSRNGRESAAQRLGVKRFGGQRVNAGEIIIRQRGTKFHPGDLVGRGRDDTLFALAAGSVQFGTKRGRKTVSIVPQQ.

A disordered region spans residues 1–23 (MAHKKGASSSRNGRESAAQRLGV).

Belongs to the bacterial ribosomal protein bL27 family.

The protein is Large ribosomal subunit protein bL27 of Salinispora arenicola (strain CNS-205).